A 188-amino-acid polypeptide reads, in one-letter code: Large ribosomal subunit protein bL32m (188 aa).

Residues Cys110, Cys113, Cys123, and Cys126 each contribute to the Zn(2+) site. Residues 164 to 188 are disordered; sequence TPSEQDQGKRIIERDRKRPSWFTQN. Over residues 169–181 the composition is skewed to basic and acidic residues; sequence DQGKRIIERDRKR.

Belongs to the bacterial ribosomal protein bL32 family. Component of the mitochondrial large ribosomal subunit (mt-LSU). Mature mammalian 55S mitochondrial ribosomes consist of a small (28S) and a large (39S) subunit. The 28S small subunit contains a 12S ribosomal RNA (12S mt-rRNA) and 30 different proteins. The 39S large subunit contains a 16S rRNA (16S mt-rRNA), a copy of mitochondrial valine transfer RNA (mt-tRNA(Val)), which plays an integral structural role, and 52 different proteins. bL32m has a zinc binding site. MRPL32 precursor is processed by the m-AAA protease (composed of AFG3L2 and SPG7), which cleaves the N-terminal transit peptide. Cleavage by the m-AAA protease takes place prior to assembly into the large subunit, an essential step for mitochondrial ribosome (mitoribosome) assembly. Proper processing by the m-AAA protease is dependent on the zinc-binding region within the tightly folded C-terminal domain of MRPL32: zinc-dependent folding halts degradation initiated from the N-terminus and triggers the release of mature MRPL32.

It is found in the mitochondrion. Functionally, component of the mitochondrial large ribosomal subunit (mt-LSU). The mitochondrial ribosome (mitoribosome) is a large ribonucleoprotein complex responsible for the synthesis of proteins inside mitochondria. The sequence is that of Large ribosomal subunit protein bL32m (MRPL32) from Homo sapiens (Human).